Here is a 133-residue protein sequence, read N- to C-terminus: Small ribosomal subunit protein uS8 (133 aa).

It belongs to the universal ribosomal protein uS8 family. As to quaternary structure, part of the 30S ribosomal subunit. Contacts proteins S5 and S12.

Functionally, one of the primary rRNA binding proteins, it binds directly to 16S rRNA central domain where it helps coordinate assembly of the platform of the 30S subunit. This is Small ribosomal subunit protein uS8 from Mycoplasma mobile (strain ATCC 43663 / 163K / NCTC 11711) (Mesomycoplasma mobile).